A 460-amino-acid chain; its full sequence is Nuclear transport factor 2 (460 aa).

Residues 15–131 form the NTF2 domain; that stretch reads VGRAFVEQYY…YFVLNDVFRF (117 aa). 3 disordered regions span residues 207–226, 238–289, and 361–460; these read EPPTQISHNEILSVPQGDAP, KSSP…VDVE, and RQAV…GGSS. One can recognise an RRM domain in the interval 293-370; that stretch reads HSIYVRNLPF…RQAVVEEKKT (78 aa). Positions 373-382 are enriched in gly residues; that stretch reads RGGGNNGGSR. The segment covering 383-394 has biased composition (low complexity); sequence GRYFSGRGSFRN. Gly residues-rich tracts occupy residues 399-416 and 450-460; these read GGRGGGGRGGYGRGGGEF and GRGGARGGGSS.

In terms of assembly, interacts with MBD6.

The protein localises to the cytoplasm. The protein resides in the nucleus. Involved in RNA-directed DNA methylation (RdDM). The sequence is that of Nuclear transport factor 2 from Arabidopsis thaliana (Mouse-ear cress).